The chain runs to 164 residues: S-ribosylhomocysteine lyase (164 aa).

Fe cation contacts are provided by His61, His65, and Cys131.

The protein belongs to the LuxS family. In terms of assembly, homodimer. The cofactor is Fe cation.

The catalysed reaction is S-(5-deoxy-D-ribos-5-yl)-L-homocysteine = (S)-4,5-dihydroxypentane-2,3-dione + L-homocysteine. In terms of biological role, involved in the synthesis of autoinducer 2 (AI-2) which is secreted by bacteria and is used to communicate both the cell density and the metabolic potential of the environment. The regulation of gene expression in response to changes in cell density is called quorum sensing. Catalyzes the transformation of S-ribosylhomocysteine (RHC) to homocysteine (HC) and 4,5-dihydroxy-2,3-pentadione (DPD). The protein is S-ribosylhomocysteine lyase of Bifidobacterium longum subsp. infantis (strain ATCC 15697 / DSM 20088 / JCM 1222 / NCTC 11817 / S12).